Here is a 363-residue protein sequence, read N- to C-terminus: Zinc finger CCCH domain-containing protein 53 (363 aa).

The segment at 154-181 adopts a C3H1-type zinc-finger fold; that stretch reads KNRPKICSFYTIGQCKRGAECSFRHEMP. The 86-residue stretch at 225 to 310 folds into the RRM domain; that stretch reads KTLYVGGLNS…PPNEYSHYPS (86 aa). A disordered region spans residues 281–348; the sequence is LISQQQNQHS…SYSYPMPPHQ (68 aa). A compositionally biased stretch (low complexity) spans 283–297; that stretch reads SQQQNQHSQMQQYYM. Residues 320–336 are compositionally biased toward polar residues; it reads FSTQESDGSSTSENNRA.

The protein is Zinc finger CCCH domain-containing protein 53 of Arabidopsis thaliana (Mouse-ear cress).